Consider the following 442-residue polypeptide: Protein PHYTOCHROME KINASE SUBSTRATE 2 (442 aa).

The segment at 110–130 is disordered; sequence IFVGPKQSSKNSSETPSLRSE. The segment covering 121 to 130 has biased composition (low complexity); that stretch reads SSETPSLRSE. Residues serine 239 and serine 245 each carry the phosphoserine modification. The interval 394-442 is disordered; sequence VSGDSYTSMNRTPSYVPRFPVEANPTSTETRRRISSSSVSHTQSPFLYT. The segment covering 397–406 has biased composition (polar residues); it reads DSYTSMNRTP. Residues 428–442 are compositionally biased toward low complexity; the sequence is SSSSVSHTQSPFLYT.

It belongs to the PKS family. As to quaternary structure, interacts with PKS1, RPT3, PHOT1 and PHOT2. As to expression, expressed in leaves, with the strongest expression on edges of the laminas. Not found in roots.

The protein localises to the cell membrane. Functionally, acts predominantly in the phot1 pathway. Involved in the leaf positioning and also in the phot2 pathway controlling the leaf flattening. Component of the network that modulates the very low-fluence response (VLFR) branch of phyA signaling. Regulates phytochrome-mediated photomorphogenesis and hypocotyl phototropism. May act by controlling auxin homeostasis. The chain is Protein PHYTOCHROME KINASE SUBSTRATE 2 (PKS2) from Arabidopsis thaliana (Mouse-ear cress).